We begin with the raw amino-acid sequence, 154 residues long: Iron sulfur cluster assembly protein 1, mitochondrial (154 aa).

Belongs to the NifU family. As to quaternary structure, component of the core Fe-S cluster (ISC) assembly machinery. [2Fe-2S] cluster serves as cofactor.

It localises to the mitochondrion matrix. It participates in cofactor biosynthesis; iron-sulfur cluster biosynthesis. In terms of biological role, scaffold protein for the de novo synthesis of iron-sulfur (Fe-S) clusters within mitochondria, which is required for maturation of both mitochondrial and cytoplasmic [2Fe-2S] and [4Fe-4S] proteins. First, a [2Fe-2S] cluster is transiently assembled on the scaffold protein ISU1. In a second step, the cluster is released from ISU1, transferred to a glutaredoxin, followed by the formation of mitochondrial [2Fe-2S] proteins, the synthesis of [4Fe-4S] clusters and their target-specific insertion into the recipient apoproteins. Cluster assembly on ISU1 depends on the function of the cysteine desulfurase complex NFS1-ISD11, which serves as the sulfur donor for cluster synthesis, the iron-binding protein frataxin as the putative iron donor, and the electron transfer chain comprised of ferredoxin reductase and ferredoxin, which receive their electrons from NADH. This chain is Iron sulfur cluster assembly protein 1, mitochondrial (ISU1), found in Eremothecium gossypii (strain ATCC 10895 / CBS 109.51 / FGSC 9923 / NRRL Y-1056) (Yeast).